A 792-amino-acid chain; its full sequence is RNA-binding protein RRM4 (792 aa).

Positions 37–60 (TDSTAQASHAAEQTIDAHQQAGDV) are disordered. RRM domains are found at residues 72–145 (PLLY…QDAS), 154–235 (KPRL…IDTA), and 321–398 (CNLF…LHEP). A compositionally biased stretch (low complexity) spans 412–424 (AANADNSDMSSNS). 2 disordered regions span residues 412–438 (AANADNSDMSSNSPPTEARKADKRQSR) and 630–649 (DESGEDLSPPRASSGSAPVP). Polar residues predominate over residues 640-649 (RASSGSAPVP). Residues 715-792 (ATDDFIDSLQ…QHKVAAGLNK (78 aa)) enclose the PABC domain.

This sequence belongs to the polyadenylate-binding protein type-1 family. Part of large ribonucleoprotein complexes (mRNPs) containing RNA-binding proteins RRM4 and PAB1, endosome-binding protein UPA1, core scaffold protein UPA2 and associated factor GRP1. Interacts (via PABC domain) with UPA1 (via PAM2 domain).

It is found in the cytoplasm. The protein localises to the cytoskeleton. The protein resides in the endosome. Functionally, key RNA-binding protein involved in the formation of polar-growing hyphae which is essential for infection by the plant pathogen. During filamentation, assembles into particles that shuttle bidirectionally along microtubules to both poles. The RRM4 transport particles are part of the endosomal mRNP transport that regulates polarity of the infectious hyphae by transporting distinct mRNAs encoding, for example, the ubiquitin fusion protein UBI1, the small G protein RHO3, or the septin CDC3, from the nucleus to cell poles. Recognizes a broad spectrum of cargo mRNAs and precisely binds at stop codons, which constitute landmark sites of translation, suggesting an intimate connection of mRNA transport and translation. Also binds to the specific binding motif UAUG of cargo mRNAs via its third RRM. Plus-end-directed KIN3, a kinesin-3 type motor, mediates anterograde transport of RRM4-containing mRNPs whereas split dynein DYM1-DYN2 functions in retrograde movement of mRNPs. The protein is RNA-binding protein RRM4 of Mycosarcoma maydis (Corn smut fungus).